We begin with the raw amino-acid sequence, 550 residues long: Hydroxylamine reductase (550 aa).

Positions 3, 6, 18, and 25 each coordinate [2Fe-2S] cluster. Hybrid [4Fe-2O-2S] cluster is bound by residues His249, Glu273, Cys317, Cys405, Cys433, Cys458, Glu492, and Lys494. The residue at position 405 (Cys405) is a Cysteine persulfide.

It belongs to the HCP family. [2Fe-2S] cluster is required as a cofactor. It depends on hybrid [4Fe-2O-2S] cluster as a cofactor.

It localises to the cytoplasm. It carries out the reaction A + NH4(+) + H2O = hydroxylamine + AH2 + H(+). Functionally, catalyzes the reduction of hydroxylamine to form NH(3) and H(2)O. This is Hydroxylamine reductase from Salmonella typhi.